Reading from the N-terminus, the 532-residue chain is E3 ubiquitin-protein ligase ICP0 (532 aa).

8 residues coordinate Zn(2+): C8, C11, C24, H26, C29, C32, C43, and C46. The segment at 8–47 adopts an RING-type zinc-finger fold; that stretch reads CPICLEDPSNYSMALPCLHAFCYVCITRWIRQNPTCPLCK. Disordered regions lie at residues 206–391, 406–426, 461–498, and 510–532; these read EYID…PMRP, APRDSSTSEAAGPSRLGAGPR, EDESARRRGNVLLRPRRQSVPPVPYPDIASTSPLIRQG, and QTQPAEPEEMRCPHNCQRYRRNQ. 2 stretches are compositionally biased toward acidic residues: residues 217–227 and 234–243; these read SEEETDSDIEV and DPEDTSDETS. Positions 286–295 are enriched in basic residues; it reads RSARLRRRQP.

In terms of processing, auto-ubiquitinated.

The catalysed reaction is S-ubiquitinyl-[E2 ubiquitin-conjugating enzyme]-L-cysteine + [acceptor protein]-L-lysine = [E2 ubiquitin-conjugating enzyme]-L-cysteine + N(6)-ubiquitinyl-[acceptor protein]-L-lysine.. Evades nuclear antiviral defenses triggered by dsDNA viruses. Acts during the initial stages of lytic infection and the reactivation of latent viral genome. Prevents the antiviral effect of nuclear bodies by degrading host PML and SP100. The protein is E3 ubiquitin-protein ligase ICP0 (63) of Equus caballus (Horse).